The chain runs to 388 residues: bZIP transcription factor ABI5 homolog (388 aa).

A disordered region spans residues Met1 to Ile36. Phosphoserine is present on Ser44. The bZIP domain maps to Val302 to Glu365. The segment at Arg304–Lys323 is basic motif. Residues Leu330 to Leu344 are leucine-zipper. A disordered region spans residues Lys368–Trp388.

The protein belongs to the bZIP family. ABI5 subfamily. Forms homodimers. Interacts with VP1. Interacts with GF14D. Interacts with PP2C51. Interacts with SAPK2. Phosphorylated at Ser-44 by SAPK6. In terms of tissue distribution, expressed in roots, leaves and panicles. Expressed in seeds.

Its subcellular location is the nucleus. In terms of biological role, transcription factor that possesses transactivation activity in yeast. Involved in abscisic acid (ABA) signaling pathway. Binds to the G-box motif 5'-CACGTG-3' of TRAB1 gene promoter. Involved in the regulation of pollen maturation. May act as negative regulator of salt stress response. Together with PYL5, PP2C30 and SAPK2, is part of an ABA signaling unit that modulates seed germination and early seedling growth. The chain is bZIP transcription factor ABI5 homolog from Oryza sativa subsp. japonica (Rice).